A 99-amino-acid chain; its full sequence is High mobility group nucleosome-binding domain-containing protein 3 (99 aa).

Composition is skewed to basic and acidic residues over residues 1–25 (MPKRKSPENTEGKDGSKVTKQEPTR), 39–53 (PEPKPRKTSAKKEPG), and 62–72 (GKKEEKQEAGK). The interval 1–99 (MPKRKSPENT…KTESVDNEGE (99 aa)) is disordered. At Ser6 the chain carries Phosphoserine. Thr10 is subject to Phosphothreonine. Phosphoserine is present on residues Ser78 and Ser93. Basic and acidic residues predominate over residues 81 to 93 (GETKAEEAQKTES).

The protein belongs to the HMGN family. In terms of assembly, interacts with the ligand binding domain of the thyroid receptor (TR) (in vitro). Requires the presence of thyroid hormone for its interaction. Interacts with transcriptional regulator SEHBP. Interacts with nucleosomes. Expressed in kidney, lung, pancreas, testis, skeletal muscle, heart, thyroid gland, pituitary gland, prostate and uterus. Low expression in liver, spleen, placenta and ovaries.

It is found in the nucleus. In terms of biological role, binds to nucleosomes, regulating chromatin structure and consequently, chromatin-dependent processes such as transcription, DNA replication and DNA repair. Affects both insulin and glucagon levels and modulates the expression of pancreatic genes involved in insulin secretion. Regulates the expression of the glucose transporter SLC2A2 by binding specifically to its promoter region and recruiting PDX1 and additional transcription factors. Regulates the expression of SLC6A9, a glycine transporter which regulates the glycine concentration in synaptic junctions in the central nervous system, by binding to its transcription start site. May play a role in ocular development and astrocyte function. This Homo sapiens (Human) protein is High mobility group nucleosome-binding domain-containing protein 3 (HMGN3).